A 1383-amino-acid chain; its full sequence is Negative regulator of sporulation MDS3 (1383 aa).

Kelch repeat units follow at residues 124–179 (CLYL…SPRF), 199–246 (GLFI…KDKE), and 356–402 (QNVV…WGGF). Polar residues predominate over residues 450–460 (GRSNNRTSSFV). 7 disordered regions span residues 450-506 (GRSN…VLDA), 625-644 (NQRL…DIPK), 653-825 (LLSS…DLFS), 858-884 (LDSF…SDES), 1063-1114 (NNSR…VDKE), 1251-1289 (QLKE…RLPQ), and 1321-1369 (SMTD…KSSS). A compositionally biased stretch (low complexity) spans 631-644 (KSSNSESSSSDIPK). Residues 693–707 (VNREEGSDCSKDRKT) show a composition bias toward basic and acidic residues. Low complexity-rich tracts occupy residues 726–758 (NSTS…EQIP), 803–815 (ESPF…SMSG), and 858–874 (LDSF…VSSV). Positions 1084–1094 (EGEKQEEIVSK) are enriched in basic and acidic residues. Residues 1251–1280 (QLKESQLQSKSSPIIPTVSTVTPSPLPSIS) are compositionally biased toward low complexity. Over residues 1341–1352 (LQQTMLSRTPTN) the composition is skewed to polar residues.

In terms of assembly, interacts with SIT4.

It localises to the cytoplasm. Functionally, negatively regulates early sporulation-specific genes. TOR signaling pathway component that contributes to morphogenesis as a regulator of this key morphogenetic pathway. Required for growth and hyphal formation at pH 9, for full virulence in a mouse model of systemic infection and for biofilm formation. Involved in chlamydospore formation, distinctive morphological feature of the fungal pathogen C.albicans that can be induced to form in oxygen-limited environments and has been reported in clinical specimens. The sequence is that of Negative regulator of sporulation MDS3 (MDS3) from Candida albicans (strain SC5314 / ATCC MYA-2876) (Yeast).